The primary structure comprises 61 residues: Large ribosomal subunit protein bL28 (61 aa).

It belongs to the bacterial ribosomal protein bL28 family.

The chain is Large ribosomal subunit protein bL28 from Geobacillus sp. (strain WCH70).